A 387-amino-acid chain; its full sequence is Succinate--CoA ligase [ADP-forming] subunit beta (387 aa).

Positions 9-236 constitute an ATP-grasp domain; that stretch reads KELFAKHNVP…RDATDPLELK (228 aa). Residues K45, 52–54, S94, and E99 contribute to the ATP site; that span reads GRG. Residues N191 and D205 each coordinate Mg(2+). Substrate is bound by residues N256 and 318–320; that span reads GIT.

It belongs to the succinate/malate CoA ligase beta subunit family. As to quaternary structure, heterotetramer of two alpha and two beta subunits. Mg(2+) is required as a cofactor.

The catalysed reaction is succinate + ATP + CoA = succinyl-CoA + ADP + phosphate. It catalyses the reaction GTP + succinate + CoA = succinyl-CoA + GDP + phosphate. It functions in the pathway carbohydrate metabolism; tricarboxylic acid cycle; succinate from succinyl-CoA (ligase route): step 1/1. In terms of biological role, succinyl-CoA synthetase functions in the citric acid cycle (TCA), coupling the hydrolysis of succinyl-CoA to the synthesis of either ATP or GTP and thus represents the only step of substrate-level phosphorylation in the TCA. The beta subunit provides nucleotide specificity of the enzyme and binds the substrate succinate, while the binding sites for coenzyme A and phosphate are found in the alpha subunit. The chain is Succinate--CoA ligase [ADP-forming] subunit beta from Mycolicibacterium smegmatis (strain ATCC 700084 / mc(2)155) (Mycobacterium smegmatis).